A 354-amino-acid polypeptide reads, in one-letter code: Uroporphyrinogen decarboxylase (354 aa).

Substrate-binding positions include 25–29 (RQAGR), Asp75, Tyr152, Thr207, and His330.

It belongs to the uroporphyrinogen decarboxylase family. As to quaternary structure, homodimer.

Its subcellular location is the cytoplasm. The enzyme catalyses uroporphyrinogen III + 4 H(+) = coproporphyrinogen III + 4 CO2. Its pathway is porphyrin-containing compound metabolism; protoporphyrin-IX biosynthesis; coproporphyrinogen-III from 5-aminolevulinate: step 4/4. Catalyzes the decarboxylation of four acetate groups of uroporphyrinogen-III to yield coproporphyrinogen-III. This chain is Uroporphyrinogen decarboxylase, found in Xanthomonas campestris pv. campestris (strain 8004).